The primary structure comprises 62 residues: Photosystem II reaction center protein Z (62 aa).

2 consecutive transmembrane segments (helical) span residues 8 to 28 and 41 to 61; these read AVFA…VVFA and FSGT…NSLI.

This sequence belongs to the PsbZ family. In terms of assembly, PSII is composed of 1 copy each of membrane proteins PsbA, PsbB, PsbC, PsbD, PsbE, PsbF, PsbH, PsbI, PsbJ, PsbK, PsbL, PsbM, PsbT, PsbY, PsbZ, Psb30/Ycf12, at least 3 peripheral proteins of the oxygen-evolving complex and a large number of cofactors. It forms dimeric complexes.

It is found in the plastid. The protein localises to the chloroplast thylakoid membrane. Functionally, may control the interaction of photosystem II (PSII) cores with the light-harvesting antenna, regulates electron flow through the 2 photosystem reaction centers. PSII is a light-driven water plastoquinone oxidoreductase, using light energy to abstract electrons from H(2)O, generating a proton gradient subsequently used for ATP formation. The sequence is that of Photosystem II reaction center protein Z from Panax ginseng (Korean ginseng).